Here is a 361-residue protein sequence, read N- to C-terminus: Peptide chain release factor 1 (361 aa).

Gln237 is modified (N5-methylglutamine). Basic and acidic residues predominate over residues 285–296 (DEKRRSAEESTR). Positions 285–305 (DEKRRSAEESTRRNLVSSGDR) are disordered.

The protein belongs to the prokaryotic/mitochondrial release factor family. In terms of processing, methylated by PrmC. Methylation increases the termination efficiency of RF1.

Its subcellular location is the cytoplasm. In terms of biological role, peptide chain release factor 1 directs the termination of translation in response to the peptide chain termination codons UAG and UAA. The polypeptide is Peptide chain release factor 1 (Shewanella halifaxensis (strain HAW-EB4)).